The chain runs to 498 residues: Dynein regulatory complex subunit 5 (498 aa).

Disordered regions lie at residues 27–52 (ALGS…LKTK) and 200–223 (MPTP…EPEK). The segment covering 28-47 (LGSSSTGPTSLKTSSTPTPG) has biased composition (low complexity). 6 LRR repeats span residues 276–299 (CHTL…ILIR), 306–327 (ALEE…AAAK), 333–353 (RLRV…QSLA), 361–382 (NLVF…AIAH), 389–409 (CLSV…TLLS), and 417–438 (TLVS…QLLE).

It belongs to the DRC5 family. In terms of assembly, component of the nexin-dynein regulatory complex (N-DRC). Interacts with DRC1. Interacts with FBXL13/DRC6, DRC3 and DRC7. Testis-specific (at protein level).

It is found in the cell projection. It localises to the cilium. Its subcellular location is the flagellum. The protein localises to the cytoplasm. The protein resides in the cytoskeleton. It is found in the flagellum axoneme. Functionally, component of the nexin-dynein regulatory complex (N-DRC) a key regulator of ciliary/flagellar motility which maintains the alignment and integrity of the distal axoneme and regulates microtubule sliding in motile axonemes. May play a role in the assembly of N-DRC. Required for sperm motility. The chain is Dynein regulatory complex subunit 5 (Tcte1) from Mus musculus (Mouse).